The chain runs to 330 residues: Apolipoprotein E (330 aa).

Positions 1 to 18 (MKVLWAALVVALLAGCWA) are cleaved as a signal peptide. Residues 21–43 (EPESPLQGKPEPELEPELEPKRE) are disordered. 7 consecutive repeat copies span residues 96-117 (TLME…EQLG), 118-139 (PMAS…ARLR), 140-161 (SDME…AMLG), 162-183 (QSTE…KRVL), 184-205 (RDAE…EGAE), 206-227 (RSVS…TRHA), and 247-268 (GRLE…EQME). Positions 96 to 268 (TLMEETMKEI…HLDEVREQME (173 aa)) are 7 X 22 AA approximate tandem repeats. At M159 the chain carries Methionine sulfoxide. Position 163 is a phosphoserine (S163). Residues 174-184 (HMRKLRKRVLR) are LDL and other lipoprotein receptors binding. 178-181 (LRKR) serves as a coordination point for heparin. The lipid-binding and lipoprotein association stretch occupies residues 226–303 (HANLATQPLR…SWFEPLVEDM (78 aa)). 242–249 (GQQLRGRL) provides a ligand contact to heparin. The interval 279-330 (NQMRQQVEAFQARLKSWFEPLVEDMQRQWAGLVEKVQVAVGTSPTTPPLETK) is homooligomerization. The interval 291–303 (RLKSWFEPLVEDM) is specificity for association with VLDL.

This sequence belongs to the apolipoprotein A1/A4/E family. In terms of assembly, homotetramer. May interact with ABCA1; functionally associated with ABCA1 in the biogenesis of HDLs. May interact with APP/A4 amyloid-beta peptide; the interaction is extremely stable in vitro but its physiological significance is unclear. May interact with MAPT. May interact with MAP2. In the cerebrospinal fluid, interacts with secreted SORL1. Interacts with PMEL; this allows the loading of PMEL luminal fragment on ILVs to induce fibril nucleation. APOE exists as multiple glycosylated and sialylated glycoforms within cells and in plasma. The extent of glycosylation and sialylation are tissue and context specific. In terms of processing, glycated in plasma VLDL. Post-translationally, phosphorylated by FAM20C in the extracellular medium.

Its subcellular location is the secreted. The protein resides in the extracellular space. It is found in the extracellular matrix. The protein localises to the extracellular vesicle. It localises to the endosome. Its subcellular location is the multivesicular body. APOE is an apolipoprotein, a protein associating with lipid particles, that mainly functions in lipoprotein-mediated lipid transport between organs via the plasma and interstitial fluids. APOE is a core component of plasma lipoproteins and is involved in their production, conversion and clearance. Apolipoproteins are amphipathic molecules that interact both with lipids of the lipoprotein particle core and the aqueous environment of the plasma. As such, APOE associates with chylomicrons, chylomicron remnants, very low density lipoproteins (VLDL) and intermediate density lipoproteins (IDL) but shows a preferential binding to high-density lipoproteins (HDL). It also binds a wide range of cellular receptors including the LDL receptor/LDLR, the LDL receptor-related proteins LRP1, LRP2 and LRP8 and the very low-density lipoprotein receptor/VLDLR that mediate the cellular uptake of the APOE-containing lipoprotein particles. Finally, APOE also has a heparin-binding activity and binds heparan-sulfate proteoglycans on the surface of cells, a property that supports the capture and the receptor-mediated uptake of APOE-containing lipoproteins by cells. A main function of APOE is to mediate lipoprotein clearance through the uptake of chylomicrons, VLDLs, and HDLs by hepatocytes. APOE is also involved in the biosynthesis by the liver of VLDLs as well as their uptake by peripheral tissues ensuring the delivery of triglycerides and energy storage in muscle, heart and adipose tissues. By participating in the lipoprotein-mediated distribution of lipids among tissues, APOE plays a critical role in plasma and tissues lipid homeostasis. APOE is also involved in two steps of reverse cholesterol transport, the HDLs-mediated transport of cholesterol from peripheral tissues to the liver, and thereby plays an important role in cholesterol homeostasis. First, it is functionally associated with ABCA1 in the biogenesis of HDLs in tissues. Second, it is enriched in circulating HDLs and mediates their uptake by hepatocytes. APOE also plays an important role in lipid transport in the central nervous system, regulating neuron survival and sprouting. This Neomonachus schauinslandi (Hawaiian monk seal) protein is Apolipoprotein E (APOE).